A 228-amino-acid polypeptide reads, in one-letter code: DNA repair and recombination protein RadB (228 aa).

This sequence belongs to the eukaryotic RecA-like protein family. RadB subfamily.

Involved in DNA repair and in homologous recombination. May regulate the cleavage reactions of the branch-structured DNA. Has a very weak ATPase activity that is not stimulated by DNA. Binds DNA but does not promote DNA strands exchange. This chain is DNA repair and recombination protein RadB, found in Thermococcus sibiricus (strain DSM 12597 / MM 739).